A 161-amino-acid polypeptide reads, in one-letter code: Ribonuclease H (161 aa).

Residues 5-149 enclose the RNase H type-1 domain; sequence EKLAIAAATD…VDAIAVAFSK (145 aa). Residues D14, E53, D78, and D141 each coordinate Mg(2+).

It belongs to the RNase H family. As to quaternary structure, monomer. The cofactor is Mg(2+).

The protein localises to the cytoplasm. The catalysed reaction is Endonucleolytic cleavage to 5'-phosphomonoester.. Endonuclease that specifically degrades the RNA of RNA-DNA hybrids. This chain is Ribonuclease H, found in Prochlorococcus marinus (strain NATL2A).